A 175-amino-acid chain; its full sequence is Peptide deformylase (175 aa).

Fe cation-binding residues include cysteine 92 and histidine 134. Glutamate 135 is an active-site residue. Histidine 138 lines the Fe cation pocket.

The protein belongs to the polypeptide deformylase family. Requires Fe(2+) as cofactor.

The enzyme catalyses N-terminal N-formyl-L-methionyl-[peptide] + H2O = N-terminal L-methionyl-[peptide] + formate. In terms of biological role, removes the formyl group from the N-terminal Met of newly synthesized proteins. Requires at least a dipeptide for an efficient rate of reaction. N-terminal L-methionine is a prerequisite for activity but the enzyme has broad specificity at other positions. This is Peptide deformylase from Blochmanniella floridana.